Reading from the N-terminus, the 64-residue chain is MPKMKTHRGAAKRLKKTGTGKLKRAKAFKKHILTKKSAKTKMNLRKSTLVSDGDAKRIAQLLPY.

The segment at 1–25 (MPKMKTHRGAAKRLKKTGTGKLKRA) is disordered.

Belongs to the bacterial ribosomal protein bL35 family.

This Clostridioides difficile (strain 630) (Peptoclostridium difficile) protein is Large ribosomal subunit protein bL35.